The chain runs to 752 residues: Primary amine oxidase (752 aa).

The first 27 residues, 1–27 (MAILSPRKTALALAVALSCAWQSPAFA), serve as a signal peptide directing secretion. Residues 408-419 (YLDSGDYGMGTL) and 490-495 (VGNYDY) each bind substrate. Asp-410 serves as the catalytic Proton acceptor. Tyr-493 functions as the Schiff-base intermediate with substrate; via topaquinone in the catalytic mechanism. Tyr-493 carries the 2',4',5'-topaquinone modification. Cu cation is bound by residues His-551 and His-553. The Ca(2+) site is built by Asp-560, Leu-561, Asp-562, Glu-600, Tyr-694, Asp-697, Glu-699, and Asp-705. Asp-560 lines the Mn(2+) pocket. Residue Asp-562 participates in Mn(2+) binding. Asp-705 contacts Mn(2+). Residue His-716 coordinates Cu cation.

The protein belongs to the copper/topaquinone oxidase family. Homodimer. Cu cation serves as cofactor. It depends on Ca(2+) as a cofactor. L-topaquinone is required as a cofactor. Requires Mn(2+) as cofactor. Post-translationally, topaquinone (TPQ) is generated by copper-dependent autoxidation of a specific tyrosyl residue.

The protein resides in the periplasm. The catalysed reaction is a primary methyl amine + O2 + H2O = an aldehyde + H2O2 + NH4(+). Active on tyramine, tryptamine, beta-phenethylamine and dopamine. In Klebsiella michiganensis (strain ATCC 8724 / DSM 4798 / JCM 20051 / NBRC 3318 / NRRL B-199 / KCTC 1686 / BUCSAV 143 / CCM 1901), this protein is Primary amine oxidase (maoA).